Here is a 409-residue protein sequence, read N- to C-terminus: NADH-quinone oxidoreductase subunit D (409 aa).

The protein belongs to the complex I 49 kDa subunit family. As to quaternary structure, NDH-1 is composed of 14 different subunits. Subunits NuoB, C, D, E, F, and G constitute the peripheral sector of the complex.

Its subcellular location is the cell inner membrane. It carries out the reaction a quinone + NADH + 5 H(+)(in) = a quinol + NAD(+) + 4 H(+)(out). Its function is as follows. NDH-1 shuttles electrons from NADH, via FMN and iron-sulfur (Fe-S) centers, to quinones in the respiratory chain. The immediate electron acceptor for the enzyme in this species is believed to be ubiquinone. Couples the redox reaction to proton translocation (for every two electrons transferred, four hydrogen ions are translocated across the cytoplasmic membrane), and thus conserves the redox energy in a proton gradient. The protein is NADH-quinone oxidoreductase subunit D of Helicobacter pylori (strain P12).